Reading from the N-terminus, the 64-residue chain is Large ribosomal subunit protein bL35 (64 aa).

Belongs to the bacterial ribosomal protein bL35 family.

This is Large ribosomal subunit protein bL35 from Ectopseudomonas mendocina (strain ymp) (Pseudomonas mendocina).